We begin with the raw amino-acid sequence, 124 residues long: UPF0337 protein blr1496 (124 aa).

The protein belongs to the UPF0337 (CsbD) family.

The sequence is that of UPF0337 protein blr1496 from Bradyrhizobium diazoefficiens (strain JCM 10833 / BCRC 13528 / IAM 13628 / NBRC 14792 / USDA 110).